Consider the following 173-residue polypeptide: Calmodulin-like protein 11 (173 aa).

Positions 1–26 (MEEIQQQQQQQQQQQQQQQQQQQQQQ) are enriched in low complexity. Residues 1-27 (MEEIQQQQQQQQQQQQQQQQQQQQQQE) are disordered. EF-hand domains lie at 31 to 66 (EQIM…LDQN), 67 to 102 (PTEQ…QLQE), 104 to 139 (DADE…LGEK), and 140 to 173 (LTDE…MING). Residues aspartate 44, aspartate 46, aspartate 48, cysteine 50, glutamate 55, aspartate 80, aspartate 82, asparagine 84, threonine 86, glutamate 91, aspartate 117, aspartate 119, asparagine 121, tyrosine 123, glutamate 128, aspartate 153, aspartate 155, aspartate 157, glutamine 159, and glutamate 164 each coordinate Ca(2+).

The protein belongs to the calmodulin family.

Potential calcium sensor. The chain is Calmodulin-like protein 11 (CML11) from Arabidopsis thaliana (Mouse-ear cress).